The sequence spans 1058 residues: Carbamoyl phosphate synthase large chain (1058 aa).

The segment at 1-401 (MPKRKDIQKI…SLLKACRSLE (401 aa)) is carboxyphosphate synthetic domain. ATP is bound by residues Arg129, Arg169, Gly175, Gly176, Arg208, Ile210, Glu215, Gly241, Ile242, His243, Gln284, and Glu298. Positions 133–327 (KQLMQELDQP…IAKLAAKIAV (195 aa)) constitute an ATP-grasp 1 domain. Residues Gln284, Glu298, and Asn300 each contribute to the Mg(2+) site. Gln284, Glu298, and Asn300 together coordinate Mn(2+). An oligomerization domain region spans residues 402–546 (IGVCHNEMTS…YSTYELENES (145 aa)). The carbamoyl phosphate synthetic domain stretch occupies residues 547-929 (VQSNKESILV…ALYKAFEANN (383 aa)). The 191-residue stretch at 671 to 861 (EKALKELGIP…MAQIATKLIL (191 aa)) folds into the ATP-grasp 2 domain. 10 residues coordinate ATP: Arg707, Ser746, Ile748, Glu752, Gly777, Val778, His779, Ser780, Gln820, and Glu832. Mg(2+) is bound by residues Gln820, Glu832, and Asn834. Positions 820, 832, and 834 each coordinate Mn(2+). In terms of domain architecture, MGS-like spans 930 to 1058 (SHLSEFGQIV…ESRCFNIEAI (129 aa)). The allosteric domain stretch occupies residues 930 to 1058 (SHLSEFGQIV…ESRCFNIEAI (129 aa)).

This sequence belongs to the CarB family. In terms of assembly, composed of two chains; the small (or glutamine) chain promotes the hydrolysis of glutamine to ammonia, which is used by the large (or ammonia) chain to synthesize carbamoyl phosphate. Tetramer of heterodimers (alpha,beta)4. Mg(2+) serves as cofactor. Mn(2+) is required as a cofactor.

The catalysed reaction is hydrogencarbonate + L-glutamine + 2 ATP + H2O = carbamoyl phosphate + L-glutamate + 2 ADP + phosphate + 2 H(+). The enzyme catalyses hydrogencarbonate + NH4(+) + 2 ATP = carbamoyl phosphate + 2 ADP + phosphate + 2 H(+). Its pathway is amino-acid biosynthesis; L-arginine biosynthesis; carbamoyl phosphate from bicarbonate: step 1/1. The protein operates within pyrimidine metabolism; UMP biosynthesis via de novo pathway; (S)-dihydroorotate from bicarbonate: step 1/3. In terms of biological role, large subunit of the glutamine-dependent carbamoyl phosphate synthetase (CPSase). CPSase catalyzes the formation of carbamoyl phosphate from the ammonia moiety of glutamine, carbonate, and phosphate donated by ATP, constituting the first step of 2 biosynthetic pathways, one leading to arginine and/or urea and the other to pyrimidine nucleotides. The large subunit (synthetase) binds the substrates ammonia (free or transferred from glutamine from the small subunit), hydrogencarbonate and ATP and carries out an ATP-coupled ligase reaction, activating hydrogencarbonate by forming carboxy phosphate which reacts with ammonia to form carbamoyl phosphate. The chain is Carbamoyl phosphate synthase large chain from Streptococcus pyogenes serotype M3 (strain SSI-1).